Reading from the N-terminus, the 670-residue chain is UvrABC system protein B (670 aa).

Residues 26 to 183 (EGLEDGLAHQ…RRLAELQYAR (158 aa)) form the Helicase ATP-binding domain. Position 39 to 46 (39 to 46 (GVTGSGKT)) interacts with ATP. Residues 92–115 (YYDYYQPEAYVPSSDTFIEKDAAV) carry the Beta-hairpin motif. In terms of domain architecture, Helicase C-terminal spans 431-597 (QVDDLLSEIR…GLNKKVSDVL (167 aa)). Residues 630–665 (DQKIRELEAQMYTHAQNLEFELAAGLRDEIHQLREQ) form the UVR domain.

This sequence belongs to the UvrB family. As to quaternary structure, forms a heterotetramer with UvrA during the search for lesions. Interacts with UvrC in an incision complex.

It is found in the cytoplasm. In terms of biological role, the UvrABC repair system catalyzes the recognition and processing of DNA lesions. A damage recognition complex composed of 2 UvrA and 2 UvrB subunits scans DNA for abnormalities. Upon binding of the UvrA(2)B(2) complex to a putative damaged site, the DNA wraps around one UvrB monomer. DNA wrap is dependent on ATP binding by UvrB and probably causes local melting of the DNA helix, facilitating insertion of UvrB beta-hairpin between the DNA strands. Then UvrB probes one DNA strand for the presence of a lesion. If a lesion is found the UvrA subunits dissociate and the UvrB-DNA preincision complex is formed. This complex is subsequently bound by UvrC and the second UvrB is released. If no lesion is found, the DNA wraps around the other UvrB subunit that will check the other stand for damage. The protein is UvrABC system protein B of Serratia proteamaculans (strain 568).